A 380-amino-acid polypeptide reads, in one-letter code: SAM and SH3 domain-containing protein 3 (380 aa).

The interval 1–76 is disordered; that stretch reads MLRRKPSNAS…KSGKKLGKKW (76 aa). Positions 22 to 41 are enriched in low complexity; it reads LQRSSSFKDFAKSKPSSPVV. Phosphoserine is present on residues serine 27, serine 34, and serine 42. Residue threonine 61 is modified to Phosphothreonine. A Phosphoserine modification is found at serine 97. Disordered stretches follow at residues 98–174, 237–256, and 318–380; these read EEMA…TGPF, VGHA…KPKT, and TGSE…AGAP. Threonine 103 carries the post-translational modification Phosphothreonine. Serine 110 carries the phosphoserine modification. Phosphothreonine is present on threonine 112. Serine 113 bears the Phosphoserine mark. Tyrosine 116 is modified (phosphotyrosine). At serine 120 the chain carries Phosphoserine. Residues 143 to 152 show a composition bias toward polar residues; the sequence is RQASTGSELC. A compositionally biased stretch (low complexity) spans 153–164; sequence SPSPGSGSFGEE. One can recognise an SH3 domain in the interval 173 to 234; that stretch reads PFCGRARVHT…KFIYVDVLPE (62 aa). Residues 241 to 255 show a composition bias toward basic residues; that stretch reads RPSRRQSKGKRPKPK. An SAM domain is found at 252–316; sequence PKPKTLHELL…LTAAELLLDY (65 aa). Residue threonine 318 is modified to Phosphothreonine. The span at 318 to 327 shows a compositional bias: acidic residues; the sequence is TGSEEAEEGA. Serine 320 bears the Phosphoserine mark.

In terms of biological role, may function as a signaling adapter protein in lymphocytes. The protein is SAM and SH3 domain-containing protein 3 (SASH3) of Homo sapiens (Human).